The following is a 548-amino-acid chain: MKTPADTGFAFPDWAYKPESSPGSRQIQLWHFILELLRKEEYQGVIAWQGDYGEFVIKDPDEVARLWGVRKCKPQMNYDKLSRALRYYYNKRILHKTKGKRFTYKFNFNKLVLVNYPFIDVGLAGGAVPQSAPPVPSGGSHFRFPPSTPSEVLSPTEDPRSPPACSSSSSSLFSAVVARRLGRGSVSDCSDGTSELEEPLGEDPRARPPGPPDLGAFRGPPLARLPHDPGVFRVYPRPRGGPEPLSPFPVSPLAGPGSLLPPQLSPALPMTPTHLAYTPSPTLSPMYPSGGGGPSGSGGGSHFSFSPEDMKRYLQAHTQSVYNYHLSPRAFLHYPGLVVPQPQRPDKCPLPPMAPETPPVPSSASSSSSSSSSPFKFKLQPPPLGRRQRAAGEKAVAGADKSGGSAGGLAEGAGALAPPPPPPQIKVEPISEGESEEVEVTDISDEDEEDGEVFKTPRAPPAPPKPEPGEAPGASQCMPLKLRFKRRWSEDCRLEGGGGPAGGFEDEGEDKKVRGEGPGEAGGPLTPRRVSSDLQHATAQLSLEHRDS.

Phosphothreonine occurs at positions 3 and 7. 2 positions are modified to phosphoserine: serine 20 and serine 24. The segment at residues 27–107 (IQLWHFILEL…KGKRFTYKFN (81 aa)) is a DNA-binding region (ETS). 3 disordered regions span residues 130–169 (QSAP…SSSS), 184–225 (GSVS…LARL), and 280–304 (SPTL…SHFS). A phosphoserine mark is found at serine 185 and serine 190. Positions 289–301 (SGGGGPSGSGGGS) are enriched in gly residues. Serine 327 carries the post-translational modification Phosphoserine. The interval 342–478 (PQRPDKCPLP…GEAPGASQCM (137 aa)) is disordered. The span at 348–361 (CPLPPMAPETPPVP) shows a compositional bias: pro residues. Composition is skewed to low complexity over residues 362–373 (SSASSSSSSSSS) and 394–403 (KAVAGADKSG). 2 positions are modified to phosphoserine: serine 431 and serine 435. Over residues 431 to 451 (SEGESEEVEVTDISDEDEEDG) the composition is skewed to acidic residues. Threonine 441 is modified (phosphothreonine). Serine 444 is modified (phosphoserine). Residues lysine 465, lysine 481, and lysine 512 each participate in a glycyl lysine isopeptide (Lys-Gly) (interchain with G-Cter in SUMO2) cross-link. The disordered stretch occupies residues 492-548 (CRLEGGGGPAGGFEDEGEDKKVRGEGPGEAGGPLTPRRVSSDLQHATAQLSLEHRDS). At threonine 526 the chain carries Phosphothreonine; by MAPK1. Phosphoserine occurs at positions 531, 532, and 548. Over residues 532–541 (SDLQHATAQL) the composition is skewed to polar residues.

This sequence belongs to the ETS family. Post-translationally, phosphorylated by multiple kinases including MAPK1/ERK2 at THR-526. Phosphorylation regulates the activity of ERF. As to expression, highest levels in testis, ovary, pancreas, and heart.

The protein localises to the nucleus. Its function is as follows. Potent transcriptional repressor that binds to the H1 element of the Ets2 promoter. May regulate other genes involved in cellular proliferation. Required for extraembryonic ectoderm differentiation, ectoplacental cone cavity closure, and chorioallantoic attachment. May be important for regulating trophoblast stem cell differentiation. The protein is ETS domain-containing transcription factor ERF (ERF) of Homo sapiens (Human).